The sequence spans 586 residues: Phosphomethylpyrimidine synthase (586 aa).

Disordered regions lie at residues 38-59 (IELS…TSGP) and 92-114 (GREI…VFPQ). Positions 92–102 (GREIKPEDDGV) are enriched in basic and acidic residues. Residues Asn-193, Met-222, Tyr-251, His-287, 307–309 (SRG), 348–351 (DGLR), and Glu-387 contribute to the substrate site. His-391 contacts Zn(2+). Tyr-414 lines the substrate pocket. His-455 lines the Zn(2+) pocket. [4Fe-4S] cluster is bound by residues Cys-535, Cys-538, and Cys-543.

This sequence belongs to the ThiC family. It depends on [4Fe-4S] cluster as a cofactor.

The catalysed reaction is 5-amino-1-(5-phospho-beta-D-ribosyl)imidazole + S-adenosyl-L-methionine = 4-amino-2-methyl-5-(phosphooxymethyl)pyrimidine + CO + 5'-deoxyadenosine + formate + L-methionine + 3 H(+). The protein operates within cofactor biosynthesis; thiamine diphosphate biosynthesis. In terms of biological role, catalyzes the synthesis of the hydroxymethylpyrimidine phosphate (HMP-P) moiety of thiamine from aminoimidazole ribotide (AIR) in a radical S-adenosyl-L-methionine (SAM)-dependent reaction. This Bacillus cytotoxicus (strain DSM 22905 / CIP 110041 / 391-98 / NVH 391-98) protein is Phosphomethylpyrimidine synthase.